The chain runs to 600 residues: Putative dehydrogenase XoxF (600 aa).

Positions 1 to 21 (MKNLMNGACLALLMSGTAALA) are cleaved as a signal peptide. The Ca(2+) site is built by Glu-192 and Asn-276. Asp-318 serves as the catalytic Proton acceptor.

The protein belongs to the bacterial PQQ dehydrogenase family. The cofactor is pyrroloquinoline quinone. Ca(2+) is required as a cofactor.

The polypeptide is Putative dehydrogenase XoxF (xoxF) (Paracoccus denitrificans).